Here is an 851-residue protein sequence, read N- to C-terminus: B-box type zinc finger protein ncl-1 (851 aa).

Positions glycine 71 to proline 91 are disordered. Low complexity predominate over residues serine 76–proline 91. The B box-type 1; atypical zinc-finger motif lies at valine 127–leucine 174. Residues cysteine 132, cysteine 135, cysteine 156, and histidine 160 each coordinate Zn(2+). Residues threonine 176–serine 197 are compositionally biased toward low complexity. Residues threonine 176–serine 211 form a disordered region. A B box-type 2 zinc finger spans residues lysine 218–isoleucine 261. The Zn(2+) site is built by cysteine 223, histidine 226, cysteine 246, and histidine 251. Residues serine 303–lysine 331 are a coiled coil. 5 NHL repeats span residues histidine 573–glutamate 616, lysine 620–tyrosine 665, glycine 666–phenylalanine 707, glycine 708–glutamate 750, and glycine 751–aspartate 794.

In terms of tissue distribution, present in cells in which nucleoli are absent, and absent from large cells in which nucleoli are prominent. Highly expressed in the gonads.

It is found in the cytoplasm. Functionally, translational repressor that inhibits protein synthesis. Represses the translation of mRNAs such as fib-1, probably by being recruited by RNA-binding protein nos-2 and the Pumilio proteins puf-5, puf-8 and puf-9 to the consensus core PUF binding motif in the 3'-UTR of fib-1 mRNA. Negatively regulates ribosomal RNA (rRNA) synthesis, ribosomal protein synthesis and nucleolus size. Its role in the negative regulation of nucleolus size is most likely through its negative regulation of the translation of proteins such as the rRNA 2'-O-methyltransferase fib-1, and dao-5. Might act directly as a transcription factor to inhibit RNA polymerase I (rRNA) and III (5S RNA) transcription. Plays a role in embryonic development, and in particular, is involved in regulating the localization of proteins, such as par-2, that are required for embryonic cell polarity. Plays a role in the regulation of lifespan, and the response to nutrient availability. This Caenorhabditis elegans protein is B-box type zinc finger protein ncl-1.